Consider the following 265-residue polypeptide: Adenosylcobinamide-GDP ribazoletransferase (265 aa).

4 helical membrane passes run 51-71 (LVGVILGVLCALVFYFTQLIF), 72-92 (PDSVAIVLTMAFSLLLTGAFH), 121-140 (IGTYGAATLVMALLAKFVLW), and 203-223 (VASLFLGVIQTSFIVIVLFAF).

It belongs to the CobS family. Mg(2+) is required as a cofactor.

The protein localises to the cell inner membrane. The catalysed reaction is alpha-ribazole + adenosylcob(III)inamide-GDP = adenosylcob(III)alamin + GMP + H(+). It carries out the reaction alpha-ribazole 5'-phosphate + adenosylcob(III)inamide-GDP = adenosylcob(III)alamin 5'-phosphate + GMP + H(+). Its pathway is cofactor biosynthesis; adenosylcobalamin biosynthesis; adenosylcobalamin from cob(II)yrinate a,c-diamide: step 7/7. Its function is as follows. Joins adenosylcobinamide-GDP and alpha-ribazole to generate adenosylcobalamin (Ado-cobalamin). Also synthesizes adenosylcobalamin 5'-phosphate from adenosylcobinamide-GDP and alpha-ribazole 5'-phosphate. The chain is Adenosylcobinamide-GDP ribazoletransferase from Vibrio parahaemolyticus serotype O3:K6 (strain RIMD 2210633).